The primary structure comprises 184 residues: Large ribosomal subunit protein uL6 (184 aa).

The protein belongs to the universal ribosomal protein uL6 family. As to quaternary structure, part of the 50S ribosomal subunit.

Its function is as follows. This protein binds to the 23S rRNA, and is important in its secondary structure. It is located near the subunit interface in the base of the L7/L12 stalk, and near the tRNA binding site of the peptidyltransferase center. In Thermosipho melanesiensis (strain DSM 12029 / CIP 104789 / BI429), this protein is Large ribosomal subunit protein uL6.